We begin with the raw amino-acid sequence, 379 residues long: Lipid-A-disaccharide synthase (379 aa).

Belongs to the LpxB family.

The catalysed reaction is a lipid X + a UDP-2-N,3-O-bis[(3R)-3-hydroxyacyl]-alpha-D-glucosamine = a lipid A disaccharide + UDP + H(+). It participates in bacterial outer membrane biogenesis; LPS lipid A biosynthesis. In terms of biological role, condensation of UDP-2,3-diacylglucosamine and 2,3-diacylglucosamine-1-phosphate to form lipid A disaccharide, a precursor of lipid A, a phosphorylated glycolipid that anchors the lipopolysaccharide to the outer membrane of the cell. This chain is Lipid-A-disaccharide synthase, found in Pseudomonas fluorescens (strain SBW25).